A 706-amino-acid chain; its full sequence is ABC transporter D family member 2, chloroplastic (706 aa).

A chloroplast-targeting transit peptide spans 1–44 (MILMITAPVCPPHLLLRHSSLLRHESSIGNFHRKKNPRFRTVSC). Position 45 is an N-acetylserine (S45). Helical transmembrane passes span 88–108 (LAAV…FNFL), 124–144 (FTKQ…FFVL), 200–222 (TALS…SNIL), 237–257 (SFGG…LNFL), and 326–346 (ILPV…FGVI). In terms of domain architecture, ABC transmembrane type-1 spans 88–372 (LAAVFALTLA…VVYQFQAISS (285 aa)). An ABC transporter domain is found at 430–697 (LEIEELTLQT…DAQDSLYGRL (268 aa)). 464-471 (GPSGSGKT) lines the ATP pocket. The segment at 545-569 (TTPGGSNIDGSPPLLIREDGNEKPT) is disordered. Residues 560–569 (IREDGNEKPT) are compositionally biased toward basic and acidic residues.

This sequence belongs to the ABC transporter superfamily. ABCD family. Peroxisomal fatty acyl CoA transporter (TC 3.A.1.203) subfamily. In terms of assembly, homodimer or heterodimer.

It is found in the membrane. It localises to the plastid. The protein resides in the chloroplast. In Arabidopsis thaliana (Mouse-ear cress), this protein is ABC transporter D family member 2, chloroplastic (ABCC2).